A 301-amino-acid polypeptide reads, in one-letter code: Large ribosomal subunit protein uL18 (301 aa).

The segment covering 257–271 (NPERVKSTKKNDKPK) has biased composition (basic and acidic residues). The interval 257 to 283 (NPERVKSTKKNDKPKRDHKKFYPTKLT) is disordered.

The protein belongs to the universal ribosomal protein uL18 family. Component of the large ribosomal subunit (LSU).

Its subcellular location is the cytoplasm. It localises to the nucleus. Functionally, component of the ribosome, a large ribonucleoprotein complex responsible for the synthesis of proteins in the cell. The small ribosomal subunit (SSU) binds messenger RNAs (mRNAs) and translates the encoded message by selecting cognate aminoacyl-transfer RNA (tRNA) molecules. The large subunit (LSU) contains the ribosomal catalytic site termed the peptidyl transferase center (PTC), which catalyzes the formation of peptide bonds, thereby polymerizing the amino acids delivered by tRNAs into a polypeptide chain. The nascent polypeptides leave the ribosome through a tunnel in the LSU and interact with protein factors that function in enzymatic processing, targeting, and the membrane insertion of nascent chains at the exit of the ribosomal tunnel. The chain is Large ribosomal subunit protein uL18 (RPL5) from Tetrahymena thermophila (strain SB210).